The primary structure comprises 530 residues: Netrin-G2 (530 aa).

Positions 1-17 are cleaved as a signal peptide; sequence MLHLLALFLHCLPLASG. 3 disulfides stabilise this stretch: Cys22-Cys39, Cys61-Cys81, and Cys69-Cys77. The 252-residue stretch at 35–286 folds into the Laminin N-terminal domain; the sequence is EFYACQPKVM…AISNIEVIGR (252 aa). Residues 69–88 form an NGL discriminant loop I region; it reads CSHENPYLCSNECDASNPDL. Asn122 and Asn128 each carry an N-linked (GlcNAc...) asparagine glycan. Cysteines 171 and 195 form a disulfide. The NGL discriminant loop II stretch occupies residues 201–203; sequence RWA. Residues 264-267 form an NGL discriminant loop III region; sequence TYVQ. Intrachain disulfides connect Cys287/Cys296, Cys289/Cys305, Cys307/Cys316, Cys319/Cys344, Cys353/Cys362, Cys355/Cys373, Cys376/Cys385, Cys388/Cys406, Cys409/Cys421, Cys411/Cys427, Cys429/Cys438, Cys441/Cys451, Cys456/Cys469, Cys463/Cys475, and Cys477/Cys486. 3 Laminin EGF-like domains span residues 287–346, 353–408, and 409–453; these read CKCN…ACAT, CECY…VCIE, and CNCN…GCYP. The N-linked (GlcNAc...) asparagine glycan is linked to Asn310. Asn395 carries N-linked (GlcNAc...) asparagine glycosylation. An N-linked (GlcNAc...) asparagine glycan is attached at Asn422. The GPI-anchor amidated glycine moiety is linked to residue Gly507. The propeptide at 508 to 530 is removed in mature form; the sequence is AAPRPATLLGCLLLLGLAARLGR.

Interacts with LRRC4. Post-translationally, N-glycosylated.

It is found in the cell membrane. Involved in controlling patterning and neuronal circuit formation at the laminar, cellular, subcellular and synaptic levels. Promotes neurite outgrowth of both axons and dendrites. In Homo sapiens (Human), this protein is Netrin-G2.